The primary structure comprises 2038 residues: Homeotic protein female sterile (2038 aa).

The region spanning 34-140 (RNTNQLQYLI…KVFLQKIESM (107 aa)) is the Bromo 1 domain. The disordered stretch occupies residues 145 to 284 (LELEPVTAKG…TTAMAGGVGG (140 aa)). Low complexity-rich tracts occupy residues 177–209 (GSGT…SGLQ) and 268–279 (PGSTNTTTTAMA). The helical transmembrane segment at 330–350 (AAVAAAAAAAAAAAAAAGGAA) threads the bilayer. The disordered stretch occupies residues 396–432 (KGVKRKADTTTPTANAFESPYTQMDSKSAKIATRRES). Positions 404-421 (TTTPTANAFESPYTQMDS) are enriched in polar residues. Residues 451–471 (VSGVPGLGGLVAGGVAGVAVA) form a helical membrane-spanning segment. Serine 452 bears the Phosphoserine mark. Residues 475-584 (EKLSDALKSC…DVFEMRYANI (110 aa)) form the Bromo 2 domain. Disordered regions lie at residues 590-655 (ANAA…ERSA) and 677-735 (EASA…SVPG). Over residues 593–619 (AHHHGHGHGHGHGHGHGHGHGHGHGHG) the composition is skewed to basic residues. Residues 636 to 649 (SSEDSSDTENESNS) are compositionally biased toward acidic residues. Over residues 681–694 (KKKAKKKLKEKKKS) the composition is skewed to basic residues. A compositionally biased stretch (gly residues) spans 711 to 735 (TGGGANAGGAGGPGSGGHGSVSVPG). 3 helical membrane-spanning segments follow: residues 750–770 (LNAL…AGGV), 790–810 (MAGG…AAGA), and 816–830 (AGTL…AAAG). 10 disordered regions span residues 832-858 (GGTT…SGAG), 891-956 (AGAA…SYDE), 1016-1139 (CLRK…GGNL), 1217-1260 (AVSA…ATVA), 1384-1416 (QPAG…QQQQ), 1502-1530 (MQQM…QQQH), 1580-1616 (IESM…PNAA), 1645-1728 (WSSL…VAQA), 1745-1918 (AAAA…SGAI), and 1957-2023 (MESG…GQID). A helical transmembrane segment spans residues 874–894 (GAAGAAAGAGSVGGVGGAGAA). Gly residues predominate over residues 910–927 (GAGGGVGGANASAGGAGA). The region spanning 942–1024 (DSEEEDTAKP…SCLRKKTHKK (83 aa)) is the NET domain. Position 943 is a phosphoserine (serine 943). The span at 1017–1027 (LRKKTHKKPSG) shows a compositional bias: basic residues. The segment covering 1028-1046 (KSKDEQMAEKKQELEKRLQ) has biased composition (basic and acidic residues). The span at 1079-1100 (SSSSSSSDSSSSSSSDSSSSDS) shows a compositional bias: low complexity. Polar residues-rich tracts occupy residues 1121 to 1131 (SNGSNVNNPSI) and 1222 to 1232 (TGQQHNKNGPN). Residues 1645-1665 (WSSLASANSPQSHTSSSSSSS) are compositionally biased toward low complexity. A Phosphoserine modification is found at serine 1653. The span at 1680-1708 (KAKERDRLKLLEAAEKEKKNQKEAAEKEQ) shows a compositional bias: basic and acidic residues. Low complexity-rich tracts occupy residues 1716–1728 (SSSS…VAQA) and 1745–1760 (AAAA…PSGG). Residues 1731–1751 (IAAATAAAAVTLGAAAAAALA) form a helical membrane-spanning segment. The span at 1776–1791 (GDRDRDRDRERERERS) shows a compositional bias: basic and acidic residues. Positions 1800–1813 (NGNNSSNSANSNGP) are enriched in low complexity. Gly residues-rich tracts occupy residues 1814–1828 (GSAG…GGSG) and 1835–1856 (PNSG…GGGP). Over residues 1857 to 1884 (ALLNAGSNSNSGVGSGGAASSNSNSSVG) the composition is skewed to low complexity. Residues 1885–1915 (GIVGSGGPGSNSQGSSGGGGGGPASGGGMGS) show a composition bias toward gly residues. A helical transmembrane segment spans residues 1939–1959 (VAAAVAAQAILAASPLGAMES). Phosphoserine is present on residues serine 1980 and serine 1988. Positions 1986 to 1997 (QSSPAQQSPQDR) are enriched in low complexity. Positions 1998–2017 (AAAKRAEQRRAEQERRRREA) are enriched in basic and acidic residues.

The protein localises to the membrane. Functionally, required maternally for proper expression of other homeotic genes involved in pattern formation, such as Ubx. The polypeptide is Homeotic protein female sterile (fs(1)h) (Drosophila melanogaster (Fruit fly)).